We begin with the raw amino-acid sequence, 30 residues long: Elongation factor 1-delta (30 aa).

The protein belongs to the EF-1-beta/EF-1-delta family. EF-1 is composed of 4 subunits: alpha, beta (1B-alpha=beta'), delta (1B-beta), and gamma (1B-gamma).

Its function is as follows. EF-1-beta and EF-1-delta stimulate the exchange of GDP bound to EF-1-alpha to GTP. The protein is Elongation factor 1-delta of Populus euphratica (Euphrates poplar).